Consider the following 236-residue polypeptide: Demethylmenaquinone methyltransferase (236 aa).

Residues Thr58, Asp79, and 106-107 (NA) contribute to the S-adenosyl-L-methionine site.

It belongs to the class I-like SAM-binding methyltransferase superfamily. MenG/UbiE family.

It catalyses the reaction a 2-demethylmenaquinol + S-adenosyl-L-methionine = a menaquinol + S-adenosyl-L-homocysteine + H(+). The protein operates within quinol/quinone metabolism; menaquinone biosynthesis; menaquinol from 1,4-dihydroxy-2-naphthoate: step 2/2. Functionally, methyltransferase required for the conversion of demethylmenaquinol (DMKH2) to menaquinol (MKH2). The chain is Demethylmenaquinone methyltransferase from Listeria welshimeri serovar 6b (strain ATCC 35897 / DSM 20650 / CCUG 15529 / CIP 8149 / NCTC 11857 / SLCC 5334 / V8).